The following is a 451-amino-acid chain: F-box/kelch-repeat protein At1g74510 (451 aa).

The F-box domain maps to 93 to 139 (SSPVTRLDQNALLNCLAHCSLSDFGSIASTNRTFRSLIKDSELYRLR). Kelch repeat units lie at residues 137–188 (RLRR…KESL), 193–236 (ELLV…SLGE), 237–284 (IAVI…FMDG), 286–333 (FYCI…DQAK), and 349–395 (AVVK…GMAF).

The chain is F-box/kelch-repeat protein At1g74510 from Arabidopsis thaliana (Mouse-ear cress).